The following is a 436-amino-acid chain: tRNA-2-methylthio-N(6)-dimethylallyladenosine synthase (436 aa).

One can recognise an MTTase N-terminal domain in the interval 5-120 (KKLFIQTLGC…IKDVVDVKGA (116 aa)). Positions 14, 51, 83, 152, 156, and 159 each coordinate [4Fe-4S] cluster. The region spanning 138-372 (KTNKYRASVN…IELHKRYLEE (235 aa)) is the Radical SAM core domain. In terms of domain architecture, TRAM spans 375 to 436 (PKLIGETLNI…RTSLKGEVVN (62 aa)).

It belongs to the methylthiotransferase family. MiaB subfamily. As to quaternary structure, monomer. It depends on [4Fe-4S] cluster as a cofactor.

It is found in the cytoplasm. It catalyses the reaction N(6)-dimethylallyladenosine(37) in tRNA + (sulfur carrier)-SH + AH2 + 2 S-adenosyl-L-methionine = 2-methylsulfanyl-N(6)-dimethylallyladenosine(37) in tRNA + (sulfur carrier)-H + 5'-deoxyadenosine + L-methionine + A + S-adenosyl-L-homocysteine + 2 H(+). Catalyzes the methylthiolation of N6-(dimethylallyl)adenosine (i(6)A), leading to the formation of 2-methylthio-N6-(dimethylallyl)adenosine (ms(2)i(6)A) at position 37 in tRNAs that read codons beginning with uridine. The polypeptide is tRNA-2-methylthio-N(6)-dimethylallyladenosine synthase (Aliarcobacter butzleri (strain RM4018) (Arcobacter butzleri)).